The chain runs to 464 residues: Glutamate decarboxylase beta (464 aa).

Lysine 275 carries the post-translational modification N6-(pyridoxal phosphate)lysine.

Belongs to the group II decarboxylase family. Pyridoxal 5'-phosphate serves as cofactor.

The catalysed reaction is L-glutamate + H(+) = 4-aminobutanoate + CO2. Converts internalized glutamate to GABA and increases the internal pH. Involved in glutamate-dependent acid resistance in gastric fluid. In Listeria innocua serovar 6a (strain ATCC BAA-680 / CLIP 11262), this protein is Glutamate decarboxylase beta (gadB).